The following is an 881-amino-acid chain: MASPRTPVSPPELPEKNFQYRQVQYWDQRYKDAADSGPYEWFGDFASFRALLEPELCPEDRILVLGCGNSALSYELFLGGFPNVTSVDYSPVVVAAMQVRYAHVPSLRWETMDVRALDFPSGSFDVVLEKGTLDAMLAGEPDPWNVSSEGVHTVDQVLSEVGFQKRTRQLFGSHTQLELVLAGLILVLAALLLGCLVALWVHRDPAHSTCVTEACIRVAGKILESLDRGVSPCQDFYQFSCGGWIRRNPLPNGRSRWNTFNSLWDQNQAILKHLLENTTFNSSSEAERKTRSFYLSCLQSERIEKLGAKPLRDLIDKIGGWNITGPWDEDSFMDVLKAVAGTYRATPFFTVYVSADSKSSNSNIIQVDQSGLFLPSRDYYLNRTANEKVLTAYLDYMVELGVLLGGQPTSTREQMQQVLELEIQLANITVPQDQRRDEEKIYHKMSISELQALAPAVDWLEFLSFLLSPLELGDSEPVVVYGTEYLQQVSELINRTEPSILNNYLIWNLVQKTTSSLDQRFETAQEKLLETLYGTKKSCTPRWQTCISNTDDALGFALGSLFVKATFDRQSKEIAEGMINEIRSAFEETLGDLVWMDEKTRLAAKEKADAIYDMIGFPDFILEPKELDDVYDGYEVSEDSFFQNMLNLYNFSAKVMADQLRKPPSRDQWSMTPQTVNAYYLPTKNEIVFPAGILQAPFYAHNHPKALNFGGIGVVMGHELTHAFDDQGREYDKEGNLRPWWQNESLTAFQNHTACMEEQYSQYQVNGERLNGLQTLGENIADNGGLKAAYNAYKAWLRKHGEEQPLPAVGLTNHQLFFVGFAQVWCSVRTPESSHEGLVTDPHSPARFRVLGTLSNSRDFLRHFGCPVGSPMNPGQLCEVW.

The interval 1 to 160 is methyltransferase-like region; sequence MASPRTPVSP…VHTVDQVLSE (160 aa). Residues 1–178 are Cytoplasmic-facing; that stretch reads MASPRTPVSP…QLFGSHTQLE (178 aa). Residues Trp-26 and Tyr-30 each coordinate S-adenosyl-L-methionine. The residue at position 39 (Tyr-39) is a Phosphotyrosine. S-adenosyl-L-methionine-binding positions include Trp-41, Gly-66, 88–89, 113–114, and Lys-130; these read DY and DV. Phosphoserine is present on His-174. Residues 179–199 traverse the membrane as a helical; Signal-anchor for type II membrane protein segment; the sequence is LVLAGLILVLAALLLGCLVAL. The Lumenal portion of the chain corresponds to 200–881; that stretch reads WVHRDPAHST…MNPGQLCEVW (682 aa). Residues 209 to 881 form the Peptidase M13 domain; the sequence is TCVTEACIRV…MNPGQLCEVW (673 aa). 5 disulfide bridges follow: Cys-210–Cys-215, Cys-233–Cys-866, Cys-241–Cys-826, Cys-297–Cys-546, and Cys-755–Cys-878. Residues Asn-277, Asn-281, Asn-322, Asn-382, Asn-427, Asn-494, and Asn-650 are each glycosylated (N-linked (GlcNAc...) asparagine). His-718 contacts Zn(2+). The active site involves Glu-719. His-722 is a binding site for Zn(2+). N-linked (GlcNAc...) asparagine glycans are attached at residues Asn-743 and Asn-751. Zn(2+) is bound at residue Glu-778. Asp-782 (proton donor) is an active-site residue.

In the N-terminal section; belongs to the methyltransferase superfamily. The protein in the C-terminal section; belongs to the peptidase M13 family. Zn(2+) serves as cofactor. In terms of tissue distribution, expressed at high levels in central nervous system. Expressed in adrenal glands, ovary and uterus, and at low levels in heart.

Its subcellular location is the golgi apparatus membrane. It is found in the cytoplasmic vesicle. The protein resides in the secretory vesicle membrane. It catalyses the reaction Hydrolysis of the 21-Trp-|-Val-22 bond in big endothelin to form endothelin 1.. Its activity is regulated as follows. Inhibited by phosphoramidon. In terms of biological role, converts big endothelin-1 to endothelin-1. May also have methyltransferase activity. May play a role in amyloid-beta processing. This Mus musculus (Mouse) protein is EEF1AKMT4-ECE2 readthrough transcript protein.